We begin with the raw amino-acid sequence, 279 residues long: Putative cysteine-rich repeat secretory protein 22 (279 aa).

The first 31 residues, 1–31 (MSSSSASKLLGSVLVFAMISVQIVFIHCVMS), serve as a signal peptide directing secretion. Gnk2-homologous domains follow at residues 44-146 (YLHH…PINS) and 152-276 (YEYN…LYRF).

It belongs to the cysteine-rich repeat secretory protein family.

Its subcellular location is the secreted. In Arabidopsis thaliana (Mouse-ear cress), this protein is Putative cysteine-rich repeat secretory protein 22 (CRRSP22).